The sequence spans 646 residues: Threonine--tRNA ligase (646 aa).

The region spanning 1-61 (MIKITFPDGS…NEDANFVLYK (61 aa)) is the TGS domain. The interval 242–541 (DHRKIGKEMD…LIEHTAGKFP (300 aa)) is catalytic. Residues C337, H388, and H518 each coordinate Zn(2+).

This sequence belongs to the class-II aminoacyl-tRNA synthetase family. As to quaternary structure, homodimer. Zn(2+) is required as a cofactor.

Its subcellular location is the cytoplasm. The enzyme catalyses tRNA(Thr) + L-threonine + ATP = L-threonyl-tRNA(Thr) + AMP + diphosphate + H(+). Its function is as follows. Catalyzes the attachment of threonine to tRNA(Thr) in a two-step reaction: L-threonine is first activated by ATP to form Thr-AMP and then transferred to the acceptor end of tRNA(Thr). Also edits incorrectly charged L-seryl-tRNA(Thr). The chain is Threonine--tRNA ligase from Phocaeicola vulgatus (strain ATCC 8482 / DSM 1447 / JCM 5826 / CCUG 4940 / NBRC 14291 / NCTC 11154) (Bacteroides vulgatus).